A 396-amino-acid polypeptide reads, in one-letter code: MGKEKFSRSKPHVNVGTIGHVDHGKTTLTAAITSVLAAKFGGTAKAYDQIDAAPEEKARGITINTAHVEYETANRHYAHVDCPGHADYVKNMITGAAQMDGAILVVSAADGPMPQTREHILLARQVGVPYIIVFLNKCDMVDDAELLELVEMEVRELLDKYEFPGDTTPIIHGSAKLAMEGDKGPMGEQAIMKLADALDSYIPLPERAIDGAFLMPVEDVFSISGRGTVVTGRVERGIIKVGEEIEIVGIHDTQKTTCTGVEMFRKLLDQGQAGDNVGILLRGTKREDVQRGQVLCKPGSIKPHTHFTGEIYVLSKDEGGRHTPFFNNYRPQFYFRTTDVTGAIELPEGKEMVMPGDNVSIIVKLINPIAMEEGLRFAIREGGKTVGAGVVAKIIA.

Residues Lys-10–Glu-206 form the tr-type G domain. The interval Gly-19–Thr-26 is G1. Gly-19–Thr-26 is a binding site for GTP. Thr-26 is a Mg(2+) binding site. Residues Gly-60–Asn-64 are G2. Residues Asp-81–Gly-84 form a G3 region. Residues Asp-81 to His-85 and Asn-136 to Asp-139 each bind GTP. Residues Asn-136–Asp-139 form a G4 region. The G5 stretch occupies residues Ser-174–Lys-176.

The protein belongs to the TRAFAC class translation factor GTPase superfamily. Classic translation factor GTPase family. EF-Tu/EF-1A subfamily. Monomer.

The protein localises to the cytoplasm. The enzyme catalyses GTP + H2O = GDP + phosphate + H(+). Its function is as follows. GTP hydrolase that promotes the GTP-dependent binding of aminoacyl-tRNA to the A-site of ribosomes during protein biosynthesis. This chain is Elongation factor Tu 1, found in Albidiferax ferrireducens (strain ATCC BAA-621 / DSM 15236 / T118) (Rhodoferax ferrireducens).